The chain runs to 626 residues: Extracellular metalloproteinase 1 (626 aa).

The signal sequence occupies residues 1-17; that stretch reads MLSSLLAGAGLVALAAS. The propeptide occupies 18–241; that stretch reads HPTSHGNALT…IHGVVDYSAD (224 aa). N-linked (GlcNAc...) asparagine glycosylation is present at Asn-315. A Zn(2+)-binding site is contributed by His-425. Residue Glu-426 is part of the active site. His-429 provides a ligand contact to Zn(2+). The interval 606–626 is disordered; the sequence is GSGARYSSTARTGSTALPSGC. Positions 610-626 are enriched in polar residues; sequence RYSSTARTGSTALPSGC.

The protein belongs to the peptidase M36 family. Zn(2+) is required as a cofactor.

It is found in the secreted. Its function is as follows. Secreted metalloproteinase that allows assimilation of proteinaceous substrates. The sequence is that of Extracellular metalloproteinase 1 (MEP1) from Phaeosphaeria nodorum (strain SN15 / ATCC MYA-4574 / FGSC 10173) (Glume blotch fungus).